Here is a 78-residue protein sequence, read N- to C-terminus: D-alanyl carrier protein (78 aa).

In terms of domain architecture, Carrier spans 1-78; it reads MAFRENVLEI…MIITQLEALK (78 aa). Ser-36 carries the post-translational modification O-(pantetheine 4'-phosphoryl)serine.

Belongs to the DltC family. Post-translationally, 4'-phosphopantetheine is transferred from CoA to a specific serine of apo-DCP.

It is found in the cytoplasm. The protein operates within cell wall biogenesis; lipoteichoic acid biosynthesis. Functionally, carrier protein involved in the D-alanylation of lipoteichoic acid (LTA). The loading of thioester-linked D-alanine onto DltC is catalyzed by D-alanine--D-alanyl carrier protein ligase DltA. The DltC-carried D-alanyl group is further transferred to cell membrane phosphatidylglycerol (PG) by forming an ester bond, probably catalyzed by DltD. D-alanylation of LTA plays an important role in modulating the properties of the cell wall in Gram-positive bacteria, influencing the net charge of the cell wall. This is D-alanyl carrier protein from Listeria monocytogenes serotype 4b (strain CLIP80459).